Reading from the N-terminus, the 341-residue chain is MTKPSVGINGFGRIGRLVLRAAVEKDSVNVVAVNDPFISIDYMVYLFQYDSTHGRFKGTVAHEGDYLLVAKEGKSQHKIKVYNSRDPAEIQWGASGADYVVESTGVFTTIEKANAHLKGGAKKVIISAPSADAPMFVVGVNHEKYDHANDHIISNASCTTNCLAPLAKVINDNFGIIEGLMTTVHAVTATQKTVDGPSGKLWRDGRGAGQNIIPASTGAAKAVGKVIPELNGKLTGMAFRVPTPDVSVVDLTARLEKPASLDDIKKVIKAAADGPMKGILAYTEDQVVSTDFVSDTNSSIFDAGASISLNPHFVKLVSWYDNEFGYSNRVVDLISYIATKA.

NAD(+)-binding positions include 13–14, Asp-35, and Arg-85; that span reads RI. Residues 157–159, Thr-188, 217–218, and Arg-240 contribute to the D-glyceraldehyde 3-phosphate site; these read SCT and TG. The active-site Nucleophile is Cys-158. Asn-322 contacts NAD(+).

This sequence belongs to the glyceraldehyde-3-phosphate dehydrogenase family. In terms of assembly, homotetramer.

Its subcellular location is the cytoplasm. The catalysed reaction is D-glyceraldehyde 3-phosphate + phosphate + NAD(+) = (2R)-3-phospho-glyceroyl phosphate + NADH + H(+). Its pathway is carbohydrate degradation; glycolysis; pyruvate from D-glyceraldehyde 3-phosphate: step 1/5. This chain is Glyceraldehyde-3-phosphate dehydrogenase 3 (gpd-3), found in Caenorhabditis elegans.